The sequence spans 554 residues: Acetyl-S-ACP:malonate ACP transferase (554 aa).

The protein resides in the cytoplasm. It catalyses the reaction acetyl-[ACP] + malonate = malonyl-[ACP] + acetate. In terms of biological role, alpha subunit of the biotin-independent and biotin-dependent malonate decarboxylase multienzyme complex (EC 4.1.1.88 and EC 7.2.4.4, respectively). Acts as an acyl-carrier protein (ACP) transferase component. This first step in malonate decarboxylation involves the exchange of an acetyl thioester residue bound to the activated ACP subunit for a malonyl thioester residue. Has a weak activity with acetyl-CoA as substrate. The protein is Acetyl-S-ACP:malonate ACP transferase (madA) of Malonomonas rubra.